A 769-amino-acid chain; its full sequence is Phosphatidylinositol 4-phosphate 5-kinase 8 (769 aa).

8 MORN repeats span residues 16-38 (YSGQLKGTLPHGKGKYAWPDGII), 39-61 (YEGDWEEGKISGRGKLMWSSGAK), 62-84 (YEGDFSGGYLHGFGTLTSPDGSV), 85-107 (YAGAWRMNVRHGLGRKEYCNSDV), 108-130 (YDGSWREGLQDGSGSYSWYNGNR), 131-153 (FIGNWKKGKMSGRGVMSWANGDL), 154-176 (FNGFWLNGLRHGSGVYKYADGGF), and 177-198 (YFGTWSRGLKDGSGVFYPAGSK). A disordered region spans residues 266-289 (PPRDFMHHGPSSKSARSVDSGQSE). Over residues 276-288 (SSKSARSVDSGQS) the composition is skewed to polar residues. One can recognise a PIPK domain in the interval 344–765 (WNHYLMLNLQ…RFIDFLLKVF (422 aa)). The tract at residues 725 to 746 (YNMKKKVEHTCKSMKYDPMTIS) is activation loop.

The enzyme catalyses a 1,2-diacyl-sn-glycero-3-phospho-(1D-myo-inositol 4-phosphate) + ATP = a 1,2-diacyl-sn-glycero-3-phospho-(1D-myo-inositol-4,5-bisphosphate) + ADP + H(+). The chain is Phosphatidylinositol 4-phosphate 5-kinase 8 (PIP5K8) from Arabidopsis thaliana (Mouse-ear cress).